The primary structure comprises 258 residues: Ribosomal RNA small subunit methyltransferase A (258 aa).

S-adenosyl-L-methionine is bound by residues histidine 13, leucine 15, glycine 40, glutamate 61, aspartate 86, and asparagine 106.

Belongs to the class I-like SAM-binding methyltransferase superfamily. rRNA adenine N(6)-methyltransferase family. RsmA subfamily.

The protein localises to the cytoplasm. The catalysed reaction is adenosine(1518)/adenosine(1519) in 16S rRNA + 4 S-adenosyl-L-methionine = N(6)-dimethyladenosine(1518)/N(6)-dimethyladenosine(1519) in 16S rRNA + 4 S-adenosyl-L-homocysteine + 4 H(+). In terms of biological role, specifically dimethylates two adjacent adenosines (A1518 and A1519) in the loop of a conserved hairpin near the 3'-end of 16S rRNA in the 30S particle. May play a critical role in biogenesis of 30S subunits. This is Ribosomal RNA small subunit methyltransferase A from Coxiella burnetii (strain CbuG_Q212) (Coxiella burnetii (strain Q212)).